A 501-amino-acid chain; its full sequence is Glycerol kinase (501 aa).

An ADP-binding site is contributed by T14. ATP contacts are provided by T14, T15, and S16. Position 14 (T14) interacts with sn-glycerol 3-phosphate. Residue R18 participates in ADP binding. The sn-glycerol 3-phosphate site is built by R84, E85, and Y136. Glycerol is bound by residues R84, E85, and Y136. The residue at position 231 (H231) is a Phosphohistidine; by HPr. D245 provides a ligand contact to sn-glycerol 3-phosphate. D245 and Q246 together coordinate glycerol. ADP is bound by residues T267 and G310. ATP is bound by residues T267, G310, Q314, and G411. Residues G411 and N415 each contribute to the ADP site.

It belongs to the FGGY kinase family. Homotetramer and homodimer (in equilibrium). The phosphoenolpyruvate-dependent sugar phosphotransferase system (PTS), including enzyme I, and histidine-containing protein (HPr) are required for the phosphorylation of His-231, which leads to the activation of the enzyme.

The catalysed reaction is glycerol + ATP = sn-glycerol 3-phosphate + ADP + H(+). The protein operates within polyol metabolism; glycerol degradation via glycerol kinase pathway; sn-glycerol 3-phosphate from glycerol: step 1/1. With respect to regulation, activated by phosphorylation and inhibited by fructose 1,6-bisphosphate (FBP). Key enzyme in the regulation of glycerol uptake and metabolism. Catalyzes the phosphorylation of glycerol to yield sn-glycerol 3-phosphate. This chain is Glycerol kinase, found in Enterococcus faecalis (strain ATCC 700802 / V583).